Reading from the N-terminus, the 463-residue chain is Chromosomal replication initiator protein DnaA (463 aa).

A domain I, interacts with DnaA modulators region spans residues 1 to 83 (MSLSLWQQCL…LRFEVGSKPI (83 aa)). A domain II region spans residues 83–126 (IVPVAVSSAASSGASVPPAAVRASSLARPSWERVTAQPELSYRS). Positions 127-343 (NVNPKHTFDN…GALNRVIANA (217 aa)) are domain III, AAA+ region. The ATP site is built by glycine 171, glycine 173, lysine 174, and threonine 175. The segment at 344–463 (NFTGRAITID…FSNLIRTLSS (120 aa)) is domain IV, binds dsDNA.

Belongs to the DnaA family. Oligomerizes as a right-handed, spiral filament on DNA at oriC.

The protein resides in the cytoplasm. Its function is as follows. Plays an essential role in the initiation and regulation of chromosomal replication. ATP-DnaA binds to the origin of replication (oriC) to initiate formation of the DNA replication initiation complex once per cell cycle. Binds the DnaA box (a 9 base pair repeat at the origin) and separates the double-stranded (ds)DNA. Forms a right-handed helical filament on oriC DNA; dsDNA binds to the exterior of the filament while single-stranded (ss)DNA is stabiized in the filament's interior. The ATP-DnaA-oriC complex binds and stabilizes one strand of the AT-rich DNA unwinding element (DUE), permitting loading of DNA polymerase. After initiation quickly degrades to an ADP-DnaA complex that is not apt for DNA replication. Binds acidic phospholipids. This chain is Chromosomal replication initiator protein DnaA, found in Edwardsiella ictaluri (strain 93-146).